Here is a 309-residue protein sequence, read N- to C-terminus: Serine/threonine-protein phosphatase PP2A catalytic subunit (309 aa).

Mn(2+) is bound by residues Asp-57, His-59, Asp-85, and Asn-117. His-118 serves as the catalytic Proton donor. Positions 167 and 241 each coordinate Mn(2+).

The protein belongs to the PPP phosphatase family. PP-2A subfamily. Mn(2+) is required as a cofactor.

The catalysed reaction is O-phospho-L-seryl-[protein] + H2O = L-seryl-[protein] + phosphate. It carries out the reaction O-phospho-L-threonyl-[protein] + H2O = L-threonyl-[protein] + phosphate. The polypeptide is Serine/threonine-protein phosphatase PP2A catalytic subunit (Brassica napus (Rape)).